Reading from the N-terminus, the 533-residue chain is Retinoic acid receptor RXR-beta (533 aa).

Residues 1–24 form a disordered region; sequence MSWAARPPFLPQRHAAGQCGPVGV. Positions 1–204 are modulating; the sequence is MSWAARPPFL…PGGPGAGKRL (204 aa). Arg25 is modified (omega-N-methylarginine). The disordered stretch occupies residues 37-183; sequence RRRRPWLDPA…GPPEDVKPPV (147 aa). A compositionally biased stretch (low complexity) spans 46 to 61; that stretch reads AAAAAAAAAAGEQQTP. Residues 67–82 are compositionally biased toward basic and acidic residues; that stretch reads EAGRDGMGDSGRDSRS. The span at 83 to 94 shows a compositional bias: low complexity; it reads PDSSSPNPLSQG. Composition is skewed to pro residues over residues 95-109 and 118-129; these read APPP…PPSS and APPPPPMPPPQL. Residues 130–143 are compositionally biased toward low complexity; that stretch reads GSPFPVISSSMGSP. Pro residues predominate over residues 144–153; it reads GLPPPAPPGF. NR C4-type zinc fingers lie at residues 205–225 and 241–265; these read CAIC…CEGC and CRDN…YQKC. The nuclear receptor DNA-binding region spans 205–270; sequence CAICGDRSSG…RYQKCLATGM (66 aa). The hinge stretch occupies residues 271-295; sequence KREAVQEERQRGKDKDGDGEGAGGA. The segment covering 276–288 has biased composition (basic and acidic residues); it reads QEERQRGKDKDGD. Disordered stretches follow at residues 276-299 and 313-336; these read QEER…PEEM and QKSD…NDPV. An NR LBD domain is found at 296–529; it reads PEEMPVDRIL…TFLMEMLEAP (234 aa). Over residues 320–329 the composition is skewed to gly residues; sequence EGPGGTGGSG.

The protein belongs to the nuclear hormone receptor family. NR2 subfamily. In terms of assembly, homodimer (in vitro). Heterodimer with other retinoic acid receptor family members. Binds DNA preferentially as a RAR/RXR heterodimer. Interacts with NR1H3. Interacts with AKAP13.

The protein resides in the nucleus. Its subcellular location is the cytoplasm. In terms of biological role, receptor for retinoic acid. Retinoic acid receptors bind as heterodimers to their target response elements in response to their ligands, all-trans or 9-cis retinoic acid, and regulate gene expression in various biological processes. The RAR/RXR heterodimers bind to the retinoic acid response elements (RARE). The sequence is that of Retinoic acid receptor RXR-beta (RXRB) from Canis lupus familiaris (Dog).